A 244-amino-acid polypeptide reads, in one-letter code: E3 ubiquitin-protein ligase RNF166 (244 aa).

The segment at Ala10 to Ala30 is disordered. Residues Ala15–Gly28 show a composition bias toward pro residues. Residues Cys40–Arg80 form an RING-type zinc finger. Positions 105, 108, 120, and 124 each coordinate Zn(2+). The C2HC RNF-type zinc-finger motif lies at Cys105–Cys124. The UIM domain maps to Asp228–Asn244.

It is found in the cytoplasm. It carries out the reaction S-ubiquitinyl-[E2 ubiquitin-conjugating enzyme]-L-cysteine + [acceptor protein]-L-lysine = [E2 ubiquitin-conjugating enzyme]-L-cysteine + N(6)-ubiquitinyl-[acceptor protein]-L-lysine.. Its pathway is protein modification; protein ubiquitination. E3 ubiquitin-protein ligase that promotes the ubiquitination of different substrates. The sequence is that of E3 ubiquitin-protein ligase RNF166 (RNF166) from Gallus gallus (Chicken).